The primary structure comprises 206 residues: Holliday junction branch migration complex subunit RuvA (206 aa).

Residues 1-64 (MIGKLKGVLD…EDMIRLYGFR (64 aa)) are domain I. A domain II region spans residues 65–144 (TVLEREWFRL…AFAGEAAGAI (80 aa)). The flexible linker stretch occupies residues 145–154 (GLKQDLGEGV). Positions 154 to 206 (VAPAPVSDAVSALANLGYSRDIAANAVAAALKSAGEGADTGTLIRLGLKELAR) are domain III.

It belongs to the RuvA family. In terms of assembly, homotetramer. Forms an RuvA(8)-RuvB(12)-Holliday junction (HJ) complex. HJ DNA is sandwiched between 2 RuvA tetramers; dsDNA enters through RuvA and exits via RuvB. An RuvB hexamer assembles on each DNA strand where it exits the tetramer. Each RuvB hexamer is contacted by two RuvA subunits (via domain III) on 2 adjacent RuvB subunits; this complex drives branch migration. In the full resolvosome a probable DNA-RuvA(4)-RuvB(12)-RuvC(2) complex forms which resolves the HJ.

It localises to the cytoplasm. Functionally, the RuvA-RuvB-RuvC complex processes Holliday junction (HJ) DNA during genetic recombination and DNA repair, while the RuvA-RuvB complex plays an important role in the rescue of blocked DNA replication forks via replication fork reversal (RFR). RuvA specifically binds to HJ cruciform DNA, conferring on it an open structure. The RuvB hexamer acts as an ATP-dependent pump, pulling dsDNA into and through the RuvAB complex. HJ branch migration allows RuvC to scan DNA until it finds its consensus sequence, where it cleaves and resolves the cruciform DNA. The protein is Holliday junction branch migration complex subunit RuvA of Chelativorans sp. (strain BNC1).